The chain runs to 93 residues: Alpha-elapitoxin-Oh2a (93 aa).

Residues 1–21 (MKTLLLTLVVVTIVCLDLGYT) form the signal peptide. 5 cysteine pairs are disulfide-bonded: Cys-24–Cys-43, Cys-36–Cys-64, Cys-49–Cys-53, Cys-68–Cys-79, and Cys-80–Cys-85.

The protein belongs to the three-finger toxin family. Long-chain subfamily. Type II alpha-neurotoxin sub-subfamily. Expressed by the venom gland.

It is found in the secreted. In terms of biological role, binds with high affinity to muscular (alpha-1/CHRNA1) and neuronal (alpha-7/CHRNA7) nicotinic acetylcholine receptor (nAChR) and inhibits acetylcholine from binding to the receptor, thereby impairing neuromuscular and neuronal transmission. The protein is Alpha-elapitoxin-Oh2a of Ophiophagus hannah (King cobra).